A 244-amino-acid polypeptide reads, in one-letter code: Carboxy-S-adenosyl-L-methionine synthase (244 aa).

Residues tyrosine 40, 65 to 67, 90 to 91, 119 to 120, asparagine 134, and arginine 201 contribute to the S-adenosyl-L-methionine site; these read GCS, DN, and DI.

Belongs to the class I-like SAM-binding methyltransferase superfamily. Cx-SAM synthase family. As to quaternary structure, homodimer.

The catalysed reaction is prephenate + S-adenosyl-L-methionine = carboxy-S-adenosyl-L-methionine + 3-phenylpyruvate + H2O. Catalyzes the conversion of S-adenosyl-L-methionine (SAM) to carboxy-S-adenosyl-L-methionine (Cx-SAM). In Geobacter sp. (strain M21), this protein is Carboxy-S-adenosyl-L-methionine synthase.